The following is a 236-amino-acid chain: MPKVAKKKVAARAVVDRARKYTLQEACALVKQAAPAKFDETVDLAVRLGVNPRHADQMVRGAVVLPHGTGQSLRVLVFAKGEKAKEAEAAGADFVGEADLVNKVQEGFMDFDRVIATPDMMGLVGKLGRILGPRGLMPNPKVGTVTFDVKTAVSEAKAGKVEYRVEKAGIVHARIGKVSFAENALHVNADALIQALVRAKPATAKGIYLRSITMSSTMGPGVRIDPVHFIGKTEEA.

It belongs to the universal ribosomal protein uL1 family. As to quaternary structure, part of the 50S ribosomal subunit.

Binds directly to 23S rRNA. The L1 stalk is quite mobile in the ribosome, and is involved in E site tRNA release. Its function is as follows. Protein L1 is also a translational repressor protein, it controls the translation of the L11 operon by binding to its mRNA. This Sorangium cellulosum (strain So ce56) (Polyangium cellulosum (strain So ce56)) protein is Large ribosomal subunit protein uL1.